Here is a 306-residue protein sequence, read N- to C-terminus: Recombination-associated protein RdgC (306 aa).

It belongs to the RdgC family.

It localises to the cytoplasm. It is found in the nucleoid. Its function is as follows. May be involved in recombination. This is Recombination-associated protein RdgC from Pseudomonas putida (strain GB-1).